The following is a 269-amino-acid chain: Tryptophan synthase alpha chain (269 aa).

Catalysis depends on proton acceptor residues E49 and D60.

This sequence belongs to the TrpA family. In terms of assembly, tetramer of two alpha and two beta chains.

The catalysed reaction is (1S,2R)-1-C-(indol-3-yl)glycerol 3-phosphate + L-serine = D-glyceraldehyde 3-phosphate + L-tryptophan + H2O. Its pathway is amino-acid biosynthesis; L-tryptophan biosynthesis; L-tryptophan from chorismate: step 5/5. In terms of biological role, the alpha subunit is responsible for the aldol cleavage of indoleglycerol phosphate to indole and glyceraldehyde 3-phosphate. The polypeptide is Tryptophan synthase alpha chain (Actinobacillus succinogenes (strain ATCC 55618 / DSM 22257 / CCUG 43843 / 130Z)).